A 147-amino-acid polypeptide reads, in one-letter code: Globin, polymeric component P3 (147 aa).

Residues 2–146 enclose the Globin domain; sequence HLTADQVAAL…ISDALIAGLE (145 aa). His-96 lines the heme b pocket.

It belongs to the globin family. As to quaternary structure, polymer.

This Glycera dibranchiata (Bloodworm) protein is Globin, polymeric component P3.